We begin with the raw amino-acid sequence, 202 residues long: Helix-loop-helix protein 10 (202 aa).

2 disordered regions span residues 1–26 (MESS…NSEL) and 83–112 (QNKS…GKID). Positions 17-26 (STGNHGNSEL) are enriched in polar residues. The segment at 121-134 (TRRYEANARERNRV) is basic motif. Residues 121–172 (TRRYEANARERNRVQQLSKMFDQLRVCLPIEDDAKISKLATLKVASSYIGYL) form the bHLH domain. A helix-loop-helix motif region spans residues 135-172 (QQLSKMFDQLRVCLPIEDDAKISKLATLKVASSYIGYL).

In terms of assembly, heterodimer with hlh-2. Expressed in intestine, neurons in head, body and tail, and in body hypodermis, and vulva. Expressed in neurons in the male-specific genital sensilla (simple sense organs) known as rays.

The protein resides in the nucleus. It is found in the cytoplasm. Functionally, probable transcription factor which binds the E box motif 5'-CA[TC][AG]TG-3'. This chain is Helix-loop-helix protein 10, found in Caenorhabditis elegans.